We begin with the raw amino-acid sequence, 221 residues long: uncharacterized protein (221 aa).

Helical transmembrane passes span 2–22 (FIAKSIVIGLLICVLFFFFFV), 34–54 (LLTLGLLNASLTALSDLLAQA), 97–117 (AYGLCLTPIQFRWFVALSNVI), 131–151 (ALDQFIFAPLGIVFFFLFMGI), and 177–197 (ILWPAVQLFNFTFVPLVLQVI).

This sequence belongs to the peroxisomal membrane protein PXMP2/4 family.

The protein localises to the membrane. This is an uncharacterized protein from Schizosaccharomyces pombe (strain 972 / ATCC 24843) (Fission yeast).